Consider the following 408-residue polypeptide: Aspartate aminotransferase, cytoplasmic (408 aa).

Residues glycine 36, tryptophan 133, and asparagine 187 each contribute to the L-aspartate site. Position 251 is an N6-(pyridoxal phosphate)lysine (lysine 251). An L-aspartate-binding site is contributed by arginine 379.

Belongs to the class-I pyridoxal-phosphate-dependent aminotransferase family. In terms of assembly, homodimer. It depends on pyridoxal 5'-phosphate as a cofactor. In terms of tissue distribution, expressed in all somatic tissues including the nervous system.

The protein resides in the cytoplasm. The catalysed reaction is L-aspartate + 2-oxoglutarate = oxaloacetate + L-glutamate. In terms of biological role, biosynthesis of L-glutamate from L-aspartate. Important regulator of levels of glutamate, the major excitatory neurotransmitter of the central nervous system. The chain is Aspartate aminotransferase, cytoplasmic from Caenorhabditis elegans.